The primary structure comprises 171 residues: Endoribonuclease YbeY (171 aa).

3 residues coordinate Zn(2+): His130, His134, and His140.

This sequence belongs to the endoribonuclease YbeY family. The cofactor is Zn(2+).

Its subcellular location is the cytoplasm. In terms of biological role, single strand-specific metallo-endoribonuclease involved in late-stage 70S ribosome quality control and in maturation of the 3' terminus of the 16S rRNA. This Neisseria meningitidis serogroup A / serotype 4A (strain DSM 15465 / Z2491) protein is Endoribonuclease YbeY.